Reading from the N-terminus, the 472-residue chain is Glutamate--tRNA ligase 2 (472 aa).

The 'HIGH' region motif lies at 10-20; that stretch reads PSPTGYLHIGG. Cys-99, Cys-101, Cys-126, and Asp-128 together coordinate Zn(2+). A compositionally biased stretch (basic and acidic residues) spans 112–130; sequence EQQARKEKPRYDGRCRDLD. The disordered stretch occupies residues 112–137; sequence EQQARKEKPRYDGRCRDLDGPPSEEV. The 'KMSKS' region signature appears at 240-244; the sequence is RLSKR. Lys-243 provides a ligand contact to ATP.

Belongs to the class-I aminoacyl-tRNA synthetase family. Glutamate--tRNA ligase type 1 subfamily. Monomer. Zn(2+) serves as cofactor.

It localises to the cytoplasm. It carries out the reaction tRNA(Glu) + L-glutamate + ATP = L-glutamyl-tRNA(Glu) + AMP + diphosphate. Functionally, catalyzes the attachment of glutamate to tRNA(Glu) in a two-step reaction: glutamate is first activated by ATP to form Glu-AMP and then transferred to the acceptor end of tRNA(Glu). The chain is Glutamate--tRNA ligase 2 from Halorhodospira halophila (strain DSM 244 / SL1) (Ectothiorhodospira halophila (strain DSM 244 / SL1)).